We begin with the raw amino-acid sequence, 520 residues long: GMP synthase [glutamine-hydrolyzing] (520 aa).

A Glutamine amidotransferase type-1 domain is found at 9–202 (SVLIVDFGSQ…IHNIAGIKGD (194 aa)). C86 serves as the catalytic Nucleophile. Catalysis depends on residues H176 and E178. Positions 203 to 395 (WSMSAYRQKA…LGLPDSFIGR (193 aa)) constitute a GMPS ATP-PPase domain. Position 230 to 236 (230 to 236 (SGGVDSS)) interacts with ATP.

Homodimer.

The enzyme catalyses XMP + L-glutamine + ATP + H2O = GMP + L-glutamate + AMP + diphosphate + 2 H(+). It functions in the pathway purine metabolism; GMP biosynthesis; GMP from XMP (L-Gln route): step 1/1. Catalyzes the synthesis of GMP from XMP. This is GMP synthase [glutamine-hydrolyzing] from Rhizobium etli (strain CIAT 652).